The sequence spans 353 residues: Ferrochelatase (353 aa).

The span at 1–13 (MTLERTGRDEEKA) shows a compositional bias: basic and acidic residues. The disordered stretch occupies residues 1–23 (MTLERTGRDEEKALTQPPSGHSS). Fe cation is bound by residues H223 and E304.

Belongs to the ferrochelatase family.

It is found in the cytoplasm. The enzyme catalyses heme b + 2 H(+) = protoporphyrin IX + Fe(2+). It functions in the pathway porphyrin-containing compound metabolism; protoheme biosynthesis; protoheme from protoporphyrin-IX: step 1/1. Catalyzes the ferrous insertion into protoporphyrin IX. This is Ferrochelatase from Chelativorans sp. (strain BNC1).